The sequence spans 424 residues: Histidine--tRNA ligase (424 aa).

Belongs to the class-II aminoacyl-tRNA synthetase family. As to quaternary structure, homodimer.

The protein localises to the cytoplasm. It catalyses the reaction tRNA(His) + L-histidine + ATP = L-histidyl-tRNA(His) + AMP + diphosphate + H(+). The protein is Histidine--tRNA ligase of Klebsiella pneumoniae (strain 342).